A 161-amino-acid chain; its full sequence is 3-hydroxyacyl-[acyl-carrier-protein] dehydratase FabZ (161 aa).

Histidine 55 is a catalytic residue.

The protein belongs to the thioester dehydratase family. FabZ subfamily.

It is found in the cytoplasm. It catalyses the reaction a (3R)-hydroxyacyl-[ACP] = a (2E)-enoyl-[ACP] + H2O. In terms of biological role, involved in unsaturated fatty acids biosynthesis. Catalyzes the dehydration of short chain beta-hydroxyacyl-ACPs and long chain saturated and unsaturated beta-hydroxyacyl-ACPs. This is 3-hydroxyacyl-[acyl-carrier-protein] dehydratase FabZ from Jannaschia sp. (strain CCS1).